The primary structure comprises 149 residues: Inner membrane protein YfeZ (149 aa).

At 1–18 (MKSTEFHPVHYDAHGRLR) the chain is on the cytoplasmic side. Residues 19-39 (LPLLFWLVLLLQARTWVLFVI) form a helical membrane-spanning segment. Residues 40–58 (AGASREQGTALLNLFYPDH) lie on the Periplasmic side of the membrane. A helical transmembrane segment spans residues 59-79 (DNFWLGLIPGIPAVLAFLLSG). Residues 80 to 89 (RRATFPRTWR) lie on the Cytoplasmic side of the membrane. The chain crosses the membrane as a helical span at residues 90-110 (VLYFLLLLAQVVLLCWQPWLW). The Periplasmic segment spans residues 111–115 (LNGES). Residues 116–136 (VSGIGLALVVADIVALIWLLT) traverse the membrane as a helical segment. Over 137–149 (NRRLRACFYEVKE) the chain is Cytoplasmic.

It is found in the cell inner membrane. This is Inner membrane protein YfeZ (yfeZ) from Escherichia coli (strain K12).